A 392-amino-acid chain; its full sequence is GPI alpha-1,4-mannosyltransferase I, catalytic subunit (392 aa).

Residues 1-4 (MEAR) lie on the Cytoplasmic side of the membrane. Residues 5-25 (VCVLFGAAALLRLLLLCVGVY) traverse the membrane as a helical segment. Residues 26-65 (QDQTLKLKYTDVDYHVFTDAARFITQGESPYRRSTFRYTP) are Lumenal-facing. A helical transmembrane segment spans residues 66-86 (LLALLLVPNVYLSLLFGKLLF). Over 87–125 (GFCDLLSGLLMFRLLVLRGASHGSACVSCGLWLLNPLPM) the chain is Cytoplasmic. The chain crosses the membrane as a helical span at residues 126 to 148 (AVSTRGNAESVLAVLVLSTLLCL). The Lumenal portion of the chain corresponds to 149-156 (QLRKHTTA). Residues 157–177 (ALLFGLSVHMKIYPVTYALPI) form a helical membrane-spanning segment. The Cytoplasmic portion of the chain corresponds to 178–198 (ALALTAAPARGRGVLLRFFSP). The helical transmembrane segment at 199-219 (ALLRFAAVSAAVFLSLGLIFY) threads the bilayer. At 220–261 (CRYGWEFLQEAYLYHLTRRDLRHNFSPFFYLQYVCAERCWSS) the chain is on the lumenal side. Residues 262–282 (GLLPLLLLPQLLLLLLASAAF) form a helical membrane-spanning segment. Residues 283–302 (SSDLPFCCFLHTAVFVSFNR) lie on the Cytoplasmic side of the membrane. A helical transmembrane segment spans residues 303–323 (VCTSQYFLWYLCLLPVVLPRL). At 324-330 (RLRLGRG) the chain is on the lumenal side. A helical transmembrane segment spans residues 331–351 (LLLLLLWLLLQGLWLAPAYLL). Residues 352–360 (EFQGWNSFS) are Cytoplasmic-facing. The chain crosses the membrane as a helical span at residues 361–381 (WIWAASLLFLLTNTFILAQII). Topologically, residues 382 to 392 (QHYRPHDRKAD) are lumenal.

The protein belongs to the PIGM family. As to quaternary structure, part of the glycosylphosphatidylinositol-mannosyltransferase I complex that is composed of PIGM and PIGX.

The protein localises to the endoplasmic reticulum membrane. It participates in glycolipid biosynthesis; glycosylphosphatidylinositol-anchor biosynthesis. Functionally, catalytic subunit of the glycosylphosphatidylinositol-mannosyltransferase I complex which catalyzes the transfer of the first mannose, via an alpha-1,4 bond from a dolichol-phosphate-mannose (Dol-P-Man) to the glucosaminyl acyl phosphatidylinositol (GlcN-(acyl)PI) intermediate to generate alpha-D-Man-(1-&gt;4)-alpha-D-GlcN-(1-&gt;6)-(1-radyl,2-acyl-sn-glycero-3-phospho)-2-acyl-inositol and participates in the sixth step of the glycosylphosphatidylinositol-anchor biosynthesis. The sequence is that of GPI alpha-1,4-mannosyltransferase I, catalytic subunit from Danio rerio (Zebrafish).